Consider the following 438-residue polypeptide: MKIMFLGNDTVEIKDGRFFIDGYDAIELAEKFGTPLYVMSEEQIKINYNRYIEAFKRWEEETGKEFIVAYAYKANANLAITRLLAKLGCGADVVSGGELYIAKLSNVPSKKIVFNGNCKTKEEIIMGIEANIRAFNVDSISELILINETAKELGETANVAFRINPNVNPKTHPKISTGLKKNKFGLDVESGIAMKAIKMALEMEYVNVVGVHCHIGSQLTDISPFIEETRKVMDFVVELKEEGIEIEDVNLGGGLGIPYYKDKQIPTQKDLADAIINTMLKYKDKVEMPNLILEPGRSLVATAGYLLGKVHHIKETPVTKWVMIDAGMNDMMRPAMYEAYHHIINCKVKNEKEVVSIAGGLCESSDVFGRDRELDKVEVGDVLAIFDVGAYGISMANNYNARGRPRMVLTSKKGVFLIRERETYADLIAKDIVPPHLL.

Position 73 is an N6-(pyridoxal phosphate)lysine (lysine 73). Pyridoxal 5'-phosphate-binding positions include serine 217, glycine 254, and 294-297 (EPGR). 3 residues coordinate substrate: arginine 297, arginine 333, and tyrosine 337. The Proton donor role is filled by cysteine 362. 2 residues coordinate substrate: glutamate 363 and tyrosine 391. Residue tyrosine 391 coordinates pyridoxal 5'-phosphate.

It belongs to the Orn/Lys/Arg decarboxylase class-II family. LysA subfamily. Homodimer. The cofactor is pyridoxal 5'-phosphate.

It carries out the reaction meso-2,6-diaminopimelate + H(+) = L-lysine + CO2. It participates in amino-acid biosynthesis; L-lysine biosynthesis via DAP pathway; L-lysine from DL-2,6-diaminopimelate: step 1/1. Competitively inhibited by the substrate analog azelaic acid in vitro but not in vivo. Functionally, specifically catalyzes the decarboxylation of meso-diaminopimelate (meso-DAP) to L-lysine. The polypeptide is Diaminopimelate decarboxylase (Methanocaldococcus jannaschii (strain ATCC 43067 / DSM 2661 / JAL-1 / JCM 10045 / NBRC 100440) (Methanococcus jannaschii)).